The chain runs to 164 residues: Rhomboid-related protein 1 (164 aa).

The next 4 membrane-spanning stretches (helical) occupy residues 10-30 (GFNALLQLMIGVPLEMVHGVL), 32-52 (ISLLYLAGVLAGSLTVSITDM), 56-76 (VVGGSGGVYALCSAHLANVVM), and 120-140 (PSFMAHLAGAVVGVSMGLTIL). The active-site Nucleophile is S60. H125 is an active-site residue.

It belongs to the peptidase S54 family.

Its subcellular location is the membrane. The catalysed reaction is Cleaves type-1 transmembrane domains using a catalytic dyad composed of serine and histidine that are contributed by different transmembrane domains.. Its function is as follows. May be involved in regulated intramembrane proteolysis and the subsequent release of functional polypeptides from their membrane anchors. This chain is Rhomboid-related protein 1 (Rhbdl1), found in Rattus norvegicus (Rat).